A 140-amino-acid polypeptide reads, in one-letter code: MASAAAGASICIKSASFSPLAPGRISSLRSVSLPVSRKSFPSLKSSKSSFALRVSCQAKPETVAKVCGIVKKQLALPDDSEVNGLSKFSALGADSLDTVEIVMGLEEEFGISVEEESAQSIQTVQDAADLIEKLMEKKGH.

A chloroplast-targeting transit peptide spans Met-1–Cys-56. The region spanning Pro-60–Met-135 is the Carrier domain. Ser-95 carries the post-translational modification O-(pantetheine 4'-phosphoryl)serine.

This sequence belongs to the acyl carrier protein (ACP) family. Post-translationally, 4'-phosphopantetheine is transferred from CoA to a specific serine of apo-ACP by acpS. This modification is essential for activity because fatty acids are bound in thioester linkage to the sulfhydryl of the prosthetic group.

The protein localises to the plastid. It localises to the chloroplast. It functions in the pathway lipid metabolism; fatty acid biosynthesis. Functionally, carrier of the growing fatty acid chain in fatty acid biosynthesis. The chain is Acyl carrier protein 1, chloroplastic (ACL1.1) from Cuphea lanceolata (Cigar flower).